A 177-amino-acid chain; its full sequence is ATP synthase subunit delta (177 aa).

It belongs to the ATPase delta chain family. F-type ATPases have 2 components, F(1) - the catalytic core - and F(0) - the membrane proton channel. F(1) has five subunits: alpha(3), beta(3), gamma(1), delta(1), epsilon(1). F(0) has three main subunits: a(1), b(2) and c(10-14). The alpha and beta chains form an alternating ring which encloses part of the gamma chain. F(1) is attached to F(0) by a central stalk formed by the gamma and epsilon chains, while a peripheral stalk is formed by the delta and b chains.

Its subcellular location is the cell membrane. F(1)F(0) ATP synthase produces ATP from ADP in the presence of a proton or sodium gradient. F-type ATPases consist of two structural domains, F(1) containing the extramembraneous catalytic core and F(0) containing the membrane proton channel, linked together by a central stalk and a peripheral stalk. During catalysis, ATP synthesis in the catalytic domain of F(1) is coupled via a rotary mechanism of the central stalk subunits to proton translocation. In terms of biological role, this protein is part of the stalk that links CF(0) to CF(1). It either transmits conformational changes from CF(0) to CF(1) or is implicated in proton conduction. The protein is ATP synthase subunit delta of Buchnera aphidicola subsp. Schizaphis graminum (strain Sg).